The chain runs to 355 residues: Beta-porphyranase C (355 aa).

An N-terminal signal peptide occupies residues 1-18 (MIKTLKRIPLVFLIAIMA). Cysteine 19 carries the N-palmitoyl cysteine lipid modification. Residue cysteine 19 is the site of S-diacylglycerol cysteine attachment. A disordered region spans residues 22–72 (SGDNGKDKVEEQEQAQEQGEKKGQGEERDKEDGIDGLQPTFLADQDPKPDD). Residues 39-54 (QGEKKGQGEERDKEDG) are compositionally biased toward basic and acidic residues. Positions 71–355 (DDKKWIKVEG…WVRVWQLEDL (285 aa)) constitute a GH16 domain. Substrate is bound by residues tryptophan 110, glutamate 208, and glutamate 213. Glutamate 208 acts as the Nucleophile in catalysis. The active-site Proton donor is the glutamate 213.

This sequence belongs to the glycosyl hydrolase 16 family.

The protein localises to the cell outer membrane. The catalysed reaction is Hydrolysis of beta-D-galactopyranose-(1-&gt;4)-alpha-L-galactopyranose-6-sulfate linkages in porphyran.. Its function is as follows. Cleaves the sulfated polysaccharide porphyran at the (1-&gt;4) linkages between beta-D-galactopyranose and alpha-L-galactopyranose-6-sulfate, forming mostly the disaccharide alpha-L-galactopyranose-6-sulfate-(1-&gt;3)-beta-D-galactose. In Zobellia galactanivorans (strain DSM 12802 / CCUG 47099 / CIP 106680 / NCIMB 13871 / Dsij), this protein is Beta-porphyranase C (porC).